The chain runs to 374 residues: 5-pentadecatrienyl resorcinol O-methyltransferase (374 aa).

S-adenosyl-L-methionine-binding residues include aspartate 239, aspartate 261, methionine 262, and lysine 275. Histidine 279 (proton acceptor) is an active-site residue.

The protein belongs to the class I-like SAM-binding methyltransferase superfamily. Cation-independent O-methyltransferase family. COMT subfamily. Homodimer. Expressed predominantly in root hairs.

The catalysed reaction is (8Z,11Z)-5-(pentadeca-8,11,14-trien-1-yl)resorcinol + S-adenosyl-L-methionine = (8Z,11Z)-5-(pentadeca- 8,11,14-trien-1-yl)resorcinol-3-methyl ether + S-adenosyl-L-homocysteine + H(+). Functionally, O-methyltransferase involved in the biosynthetic pathway of the phytotoxin sorgoleone, a potent broad-spectrum inhibitor active against many agronomically important monocot and dicot weed species. Substrate specificity for alkylresorcinols. Strong preference for a five carbons alkyl side chain. The chain is 5-pentadecatrienyl resorcinol O-methyltransferase (OMT3) from Sorghum bicolor (Sorghum).